A 281-amino-acid polypeptide reads, in one-letter code: Pantothenate synthetase (281 aa).

An ATP-binding site is contributed by 17–24; that stretch reads MGFLHEGH. The active-site Proton donor is histidine 24. Glutamine 48 serves as a coordination point for (R)-pantoate. Glutamine 48 lines the beta-alanine pocket. 134 to 137 contacts ATP; sequence GEKD. Glutamine 140 contacts (R)-pantoate. ATP is bound by residues valine 163 and 176–179; that span reads LSSR.

It belongs to the pantothenate synthetase family. As to quaternary structure, homodimer.

It is found in the cytoplasm. It catalyses the reaction (R)-pantoate + beta-alanine + ATP = (R)-pantothenate + AMP + diphosphate + H(+). Its pathway is cofactor biosynthesis; (R)-pantothenate biosynthesis; (R)-pantothenate from (R)-pantoate and beta-alanine: step 1/1. In terms of biological role, catalyzes the condensation of pantoate with beta-alanine in an ATP-dependent reaction via a pantoyl-adenylate intermediate. This chain is Pantothenate synthetase, found in Deinococcus radiodurans (strain ATCC 13939 / DSM 20539 / JCM 16871 / CCUG 27074 / LMG 4051 / NBRC 15346 / NCIMB 9279 / VKM B-1422 / R1).